We begin with the raw amino-acid sequence, 55 residues long: Chromatin protein Cren7 (55 aa).

It belongs to the Cren7 family. As to quaternary structure, monomer. In terms of processing, methylated at multiple sites, to varying extents.

It localises to the chromosome. Its subcellular location is the cytoplasm. In terms of biological role, a chromatin protein, binds double-stranded DNA without sequence specificity. Constrains negative DNA supercoils. This Ignicoccus hospitalis (strain KIN4/I / DSM 18386 / JCM 14125) protein is Chromatin protein Cren7.